A 116-amino-acid chain; its full sequence is Ribosome-binding factor A (116 aa).

Belongs to the RbfA family. Monomer. Binds 30S ribosomal subunits, but not 50S ribosomal subunits or 70S ribosomes.

It is found in the cytoplasm. Functionally, one of several proteins that assist in the late maturation steps of the functional core of the 30S ribosomal subunit. Associates with free 30S ribosomal subunits (but not with 30S subunits that are part of 70S ribosomes or polysomes). Required for efficient processing of 16S rRNA. May interact with the 5'-terminal helix region of 16S rRNA. This chain is Ribosome-binding factor A, found in Clostridium botulinum (strain Eklund 17B / Type B).